Reading from the N-terminus, the 435-residue chain is Ribulose bisphosphate carboxylase large chain (435 aa).

The substrate site is built by Asn104 and Thr154. Lys156 functions as the Proton acceptor in the catalytic mechanism. A substrate-binding site is contributed by Lys158. Residues Lys182, Asp184, and Glu185 each contribute to the Mg(2+) site. N6-carboxylysine is present on Lys182. The active-site Proton acceptor is the His275. Positions 276, 308, and 360 each coordinate substrate.

It belongs to the RuBisCO large chain family. Type I subfamily. As to quaternary structure, heterohexadecamer of 8 large chains and 8 small chains. Mg(2+) serves as cofactor.

The protein resides in the plastid. The protein localises to the chloroplast. The enzyme catalyses 2 (2R)-3-phosphoglycerate + 2 H(+) = D-ribulose 1,5-bisphosphate + CO2 + H2O. The catalysed reaction is D-ribulose 1,5-bisphosphate + O2 = 2-phosphoglycolate + (2R)-3-phosphoglycerate + 2 H(+). Functionally, ruBisCO catalyzes two reactions: the carboxylation of D-ribulose 1,5-bisphosphate, the primary event in carbon dioxide fixation, as well as the oxidative fragmentation of the pentose substrate in the photorespiration process. Both reactions occur simultaneously and in competition at the same active site. The sequence is that of Ribulose bisphosphate carboxylase large chain from Euglena pisciformis.